We begin with the raw amino-acid sequence, 238 residues long: Uridylate kinase (238 aa).

13–16 (KLSG) serves as a coordination point for ATP. A UMP-binding site is contributed by Gly53. Positions 54 and 58 each coordinate ATP. Residues Asp73 and 134–141 (AGLPYFST) contribute to the UMP site. ATP contacts are provided by Asn162, Tyr168, and Asp171.

This sequence belongs to the UMP kinase family. In terms of assembly, homohexamer.

The protein localises to the cytoplasm. The catalysed reaction is UMP + ATP = UDP + ADP. Its pathway is pyrimidine metabolism; CTP biosynthesis via de novo pathway; UDP from UMP (UMPK route): step 1/1. Inhibited by UTP. Functionally, catalyzes the reversible phosphorylation of UMP to UDP. This is Uridylate kinase from Clavibacter michiganensis subsp. michiganensis (strain NCPPB 382).